We begin with the raw amino-acid sequence, 613 residues long: MIEVLLVTICFTVFPYQGSSIILESGNVNDYEVVYPQKVPALPKGGVQNPQPETKYEDTMQYEFHVNGEPVVLHLERNKGLFSEDYTETHYAPDGREITTSPPVQDHCYYHGYIQNEADSSAAISACDGLKGHFKHRGETYFIEPLKLSNSESHAIYKDEHVEKEDEIPKICGVTQTTSESDEPIEKISQLTNTPEQDRYLQVKKYIELYVVVDNRMYRNYNSNRDAINERVYEMVNTLNVMYRPLNFFIALIGLEIWSNQDEINIEPEVAVTLRSFGEWRNTTLLPRKRNDNAQLLTGIDFNGATVGLAYVGTLCSPTQSVAVIQDHSKRTSMVASTMAHELGHNLGINHDSASCNCNAGPCIMSATISNQPFSKFSSCSVQEHQRYLLRVRPQCILNKPLSTDIVTPPVCGNYFVERGEECDCGSPQDCQSACCNATTCKPQHEAQCDSGECCEKCKFKKAGAECRAAKDDCDLPESCTGQSAKCPTDSFQRNGHPCQNNEGYCYNGKCPIMTNQCIALGGPGVNVSPDECFTLKQNVPECGFCRIENGRKIPCAEKDKMCGKLLCEKGNATCICFPTTHDPDYGMVEPGTKCGDGKVCINRQCVDVQTAY.

Residues 1 to 20 (MIEVLLVTICFTVFPYQGSS) form the signal peptide. Positions 21–191 (IILESGNVND…DEPIEKISQL (171 aa)) are excised as a propeptide. The 197-residue stretch at 205–401 (KYIELYVVVD…VRPQCILNKP (197 aa)) folds into the Peptidase M12B domain. Glu-208 contributes to the Ca(2+) binding site. A glycan (N-linked (GlcNAc...) asparagine) is linked at Asn-282. Asp-292 provides a ligand contact to Ca(2+). Intrachain disulfides connect Cys-316-Cys-396, Cys-356-Cys-380, and Cys-358-Cys-363. Zn(2+)-binding residues include His-341, His-345, and His-351. Residues Cys-396, Asn-399, Asn-414, Phe-416, Glu-418, Glu-421, and Asp-424 each contribute to the Ca(2+) site. One can recognise a Disintegrin domain in the interval 409–495 (PPVCGNYFVE…KCPTDSFQRN (87 aa)). Intrachain disulfides connect Cys-412–Cys-441, Cys-423–Cys-436, Cys-425–Cys-431, Cys-435–Cys-458, Cys-449–Cys-455, Cys-454–Cys-480, Cys-467–Cys-487, Cys-474–Cys-506, Cys-499–Cys-511, Cys-518–Cys-568, Cys-533–Cys-575, Cys-543–Cys-577, Cys-546–Cys-556, Cys-563–Cys-601, and Cys-595–Cys-606. A glycan (N-linked (GlcNAc...) asparagine) is linked at Asn-437. The D/ECD-tripeptide motif lies at 473-475 (DCD). Ca(2+) contacts are provided by Asp-475, Leu-476, Glu-478, and Asp-490. The hypervariable region that may play important roles toward cell migration stretch occupies residues 561–574 (KMCGKLLCEKGNAT). The N-linked (GlcNAc...) asparagine glycan is linked to Asn-572.

This sequence belongs to the venom metalloproteinase (M12B) family. P-III subfamily. As to quaternary structure, monomer. Zn(2+) serves as cofactor. As to expression, expressed by the venom gland.

It localises to the secreted. Functionally, snake venom zinc metalloproteinase that may impair hemostasis in the prey. In Drysdalia coronoides (White-lipped snake), this protein is Zinc metalloproteinase-disintegrin-like MTP4.